The following is a 311-amino-acid chain: Pyrimidine-specific ribonucleoside hydrolase RihA (311 aa).

Residue His-240 is part of the active site.

This sequence belongs to the IUNH family. RihA subfamily.

Functionally, hydrolyzes cytidine or uridine to ribose and cytosine or uracil, respectively. The polypeptide is Pyrimidine-specific ribonucleoside hydrolase RihA (Salmonella agona (strain SL483)).